The primary structure comprises 375 residues: uncharacterized protein (375 aa).

It belongs to the mimivirus L17x/L18x family.

This is an uncharacterized protein from Acanthamoeba polyphaga (Amoeba).